The primary structure comprises 1453 residues: Leucine-rich repeat-containing protein 9 (1453 aa).

7 LRR repeats span residues 53–78 (FPNL…CLQL), 97–119 (CRNL…LEKL), 120–141 (IKLK…LQTL), 142–164 (KNLK…LDSN), 166–188 (QLER…NLTR), 224–248 (LQRF…AMKK), and 264–287 (KEDL…RVKL). The tract at residues 302 to 321 (LKGSGKGHSDGSNNSKVTDP) is disordered. 23 LRR repeats span residues 344–367 (LNAL…IYHI), 671–693 (KARP…TSVY), 694–715 (SHIV…LSKL), 716–737 (TGLR…VYHL), 739–758 (NLEY…GFRG), 759–784 (LMKL…MLCK), 786–812 (TTSL…VIGR), 886–908 (YLKI…LEKL), 909–930 (ENLK…LESC), 931–952 (INLE…ISKM), 953–975 (TKLT…TFDN), 976–1001 (MLHL…SFTL), 1023–1048 (LCNL…LFVI), 1092–1115 (FKQM…PVDQ), 1116–1138 (FRNV…LIYL), 1139–1161 (PNVK…LKPQ), 1201–1224 (MHSL…QLNR), 1225–1247 (LRNL…LDNL), 1248–1270 (VVLQ…AFAK), 1272–1292 (SSLL…KLQS), 1293–1317 (LVKL…KLDV), 1319–1345 (STLR…IFRL), and 1365–1388 (EFHL…PMDG).

The protein is Leucine-rich repeat-containing protein 9 (LRRC9) of Homo sapiens (Human).